Here is a 219-residue protein sequence, read N- to C-terminus: 7-cyano-7-deazaguanine synthase (219 aa).

10–20 is a binding site for ATP; the sequence is FSGGQDSTTCL. The Zn(2+) site is built by C188, C196, C199, and C202.

The protein belongs to the QueC family. The cofactor is Zn(2+).

It carries out the reaction 7-carboxy-7-deazaguanine + NH4(+) + ATP = 7-cyano-7-deazaguanine + ADP + phosphate + H2O + H(+). It functions in the pathway purine metabolism; 7-cyano-7-deazaguanine biosynthesis. In terms of biological role, catalyzes the ATP-dependent conversion of 7-carboxy-7-deazaguanine (CDG) to 7-cyano-7-deazaguanine (preQ(0)). This Neisseria meningitidis serogroup B (strain ATCC BAA-335 / MC58) protein is 7-cyano-7-deazaguanine synthase.